We begin with the raw amino-acid sequence, 366 residues long: Transcription factor bHLH74 (366 aa).

Positions 1-11 (MGGESNEGGEM) are enriched in gly residues. 2 disordered regions span residues 1–20 (MGGE…DDES) and 123–201 (GESS…APKE). Basic and acidic residues-rich tracts occupy residues 123–134 (GESSHEDHHQVS) and 159–170 (KAVEEFQEDPQR). Residues 212-262 (QATNSHSLAERVRREKISERMRLLQELVPGCNKITGKAVMLDEIINYVQSL) enclose the bHLH domain.

As to quaternary structure, homodimer. Interacts with IBH1. Binds reversibly to CRY2 after blue light illumination. As to expression, expressed constitutively in roots, leaves, stems, and flowers.

Its subcellular location is the nucleus. Transcriptional activator involved in cell elongation. Regulates the expression of a subset of genes involved in cell expansion by binding to the G-box motif. Binds to chromatin DNA of the FT gene and promotes its expression, and thus triggers flowering in response to blue light. This Arabidopsis thaliana (Mouse-ear cress) protein is Transcription factor bHLH74 (BHLH74).